The following is a 325-amino-acid chain: Ribosomal RNA small subunit methyltransferase H (325 aa).

Residues 45–47 (GGH), Asp-65, Tyr-92, Asp-113, and Gln-120 contribute to the S-adenosyl-L-methionine site.

Belongs to the methyltransferase superfamily. RsmH family.

The protein localises to the cytoplasm. The enzyme catalyses cytidine(1402) in 16S rRNA + S-adenosyl-L-methionine = N(4)-methylcytidine(1402) in 16S rRNA + S-adenosyl-L-homocysteine + H(+). In terms of biological role, specifically methylates the N4 position of cytidine in position 1402 (C1402) of 16S rRNA. The protein is Ribosomal RNA small subunit methyltransferase H of Oleidesulfovibrio alaskensis (strain ATCC BAA-1058 / DSM 17464 / G20) (Desulfovibrio alaskensis).